Consider the following 160-residue polypeptide: Major strawberry allergen Fra a 1-A (160 aa).

The protein belongs to the BetVI family. As to quaternary structure, monomer.

In terms of biological role, may be involved in ripening of fruits. This chain is Major strawberry allergen Fra a 1-A, found in Fragaria ananassa (Strawberry).